Consider the following 343-residue polypeptide: MSAFTPASEVLLRHSDDFEQSRILFAGDLQDDLPARLDTAASRAHTQQFHHWQVLSCQMGDNARFSLVATANDVADCDTLIYYWPKNKPEAQFQLMNLLSLLPVGTDIFVVGENRSGVRSAEQMLADYAPLNKVDSARRCGLYFGRLEKQPVFDADKFWGEYSVDGLTVKTLPGVFSRDGLDVGSQLLLSTLTPHTKGKVLDVGCGAGVLSVAFARHSPKIRLTLCDVSAPAVEASRATLAANGVEGEVFASNVFSEVKGCFDMIISNPPFHDGMQTSLDAAQTLIRGAVRHLNSGGELRIVANAFLPYPDVLDETFGFHEVIAQTGRFKVYRAIMTRQAKKG.

Belongs to the methyltransferase superfamily. RsmC family. In terms of assembly, monomer.

It is found in the cytoplasm. The enzyme catalyses guanosine(1207) in 16S rRNA + S-adenosyl-L-methionine = N(2)-methylguanosine(1207) in 16S rRNA + S-adenosyl-L-homocysteine + H(+). Specifically methylates the guanine in position 1207 of 16S rRNA in the 30S particle. This chain is Ribosomal RNA small subunit methyltransferase C, found in Shigella flexneri.